A 463-amino-acid chain; its full sequence is GTPase Der (463 aa).

2 EngA-type G domains span residues 2–164 (KKII…PKSK) and 198–369 (IKIG…KNYT). GTP is bound by residues 8-15 (GRPNVGKS), 55-59 (DSGGL), 116-119 (NKVD), 204-211 (GRVNVGKS), 251-255 (DTAGI), and 315-318 (NKWD). Residues 370–454 (QKMKTSRLNE…PVILIPKNRS (85 aa)) enclose the KH-like domain.

This sequence belongs to the TRAFAC class TrmE-Era-EngA-EngB-Septin-like GTPase superfamily. EngA (Der) GTPase family. In terms of assembly, associates with the 50S ribosomal subunit.

GTPase that plays an essential role in the late steps of ribosome biogenesis. The protein is GTPase Der of Campylobacter fetus subsp. fetus (strain 82-40).